A 445-amino-acid polypeptide reads, in one-letter code: Protein kinase C and casein kinase substrate in neurons protein 1 (445 aa).

Residues 12 to 282 (DETTDSFWEV…TIVSASAQED (271 aa)) enclose the F-BAR domain. Coiled-coil stretches lie at residues 146–167 (AKKLKELETAKKTYHMACKEEK) and 183–219 (TTDQQKKLQEKVDKCKNDVQKAKEKYEKSLDELNKCT). A disordered region spans residues 327 to 390 (LTQVTHGAEH…PFEEDSKGVR (64 aa)). 2 stretches are compositionally biased toward polar residues: residues 338–358 (TPQTGDRGSVSSYEKNQQYSA) and 368–379 (TAAQSASETNGG). The SH3 domain occupies 386 to 445 (SKGVRVRALYDYEGQEQDELTFKAGDELTKLEDEDEQGWCKGRLDSGQLGLYPANYVEPV).

Interacts with cobl.

It localises to the cytoplasm. The protein resides in the cytosol. The protein localises to the cell membrane. It is found in the cell projection. Its subcellular location is the synapse. It localises to the synaptosome. The protein resides in the cytoplasmic vesicle membrane. The protein localises to the ruffle membrane. It is found in the membrane. Binds to membranes via its F-BAR domain and mediates membrane tubulation. Plays a role in cellular transport processes by recruiting dynamins to membranes. Plays a role in the reorganization of the actin cytoskeleton and in neuron morphogenesis via its interaction with cobl, and by recruiting cobl to the cell cortex. Plays a role in the regulation of neurite formation, neurite branching and the regulation of neurite length. Required for normal synaptic vesicle endocytosis; this process retrieves previously released neurotransmitters to accommodate multiple cycles of neurotransmission. Required for normal excitatory and inhibitory synaptic transmission. Required for normal embryonic development, including normal development of laterality, normal body size and shape, as well as normal brain and heart development. Required for normal development of stereocilia and kinocilia in sensory hair cells of neuromasts in the posterior lateral line organ, and thus also for balance keeping and normal swimming behavior. The polypeptide is Protein kinase C and casein kinase substrate in neurons protein 1 (pacsin1b) (Danio rerio (Zebrafish)).